The chain runs to 79 residues: Acyl carrier protein (79 aa).

Residues 2-77 (DNIEQRVKKI…QAIDYARANV (76 aa)) enclose the Carrier domain. Serine 37 is subject to O-(pantetheine 4'-phosphoryl)serine.

Belongs to the acyl carrier protein (ACP) family. In terms of processing, 4'-phosphopantetheine is transferred from CoA to a specific serine of apo-ACP by AcpS. This modification is essential for activity because fatty acids are bound in thioester linkage to the sulfhydryl of the prosthetic group.

The protein localises to the cytoplasm. The protein operates within lipid metabolism; fatty acid biosynthesis. Carrier of the growing fatty acid chain in fatty acid biosynthesis. This Burkholderia cenocepacia (strain HI2424) protein is Acyl carrier protein.